The following is a 393-amino-acid chain: Diphosphomevalonate decarboxylase (393 aa).

Residues 21–24 (YWGK), arginine 77, 156–161 (SGSACR), and threonine 212 contribute to the (R)-5-diphosphomevalonate site.

The protein belongs to the diphosphomevalonate decarboxylase family. Homodimer.

The protein localises to the cytoplasm. It localises to the nucleus. The catalysed reaction is (R)-5-diphosphomevalonate + ATP = isopentenyl diphosphate + ADP + phosphate + CO2. It functions in the pathway isoprenoid biosynthesis; isopentenyl diphosphate biosynthesis via mevalonate pathway; isopentenyl diphosphate from (R)-mevalonate: step 3/3. Diphosphomevalonate decarboxylase; part of the second module of ergosterol biosynthesis pathway that includes the middle steps of the pathway. Mvd1 converts diphosphomevalonate into isopentenyl diphosphate. The second module is carried out in the vacuole and involves the formation of farnesyl diphosphate, which is also an important intermediate in the biosynthesis of ubiquinone, dolichol, heme and prenylated proteins. Activity by the mevalonate kinase erg12 first converts mevalonate into 5-phosphomevalonate. 5-phosphomevalonate is then further converted to 5-diphosphomevalonate by the phosphomevalonate kinase erg8. The diphosphomevalonate decarboxylase mvd1 then produces isopentenyl diphosphate. The isopentenyl-diphosphate delta-isomerase idi1 then catalyzes the 1,3-allylic rearrangement of the homoallylic substrate isopentenyl (IPP) to its highly electrophilic allylic isomer, dimethylallyl diphosphate (DMAPP). Finally the farnesyl diphosphate synthase fps1 catalyzes the sequential condensation of isopentenyl pyrophosphate with dimethylallyl pyrophosphate, and then with the resultant geranylpyrophosphate to the ultimate product farnesyl pyrophosphate. This is Diphosphomevalonate decarboxylase (mvd1) from Schizosaccharomyces pombe (strain 972 / ATCC 24843) (Fission yeast).